The chain runs to 960 residues: Phosphoenolpyruvate carboxylase 1 (960 aa).

S7 carries the phosphoserine modification. Catalysis depends on residues H168 and K596.

It belongs to the PEPCase type 1 family. Homotetramer. It depends on Mg(2+) as a cofactor.

It is found in the cytoplasm. The enzyme catalyses oxaloacetate + phosphate = phosphoenolpyruvate + hydrogencarbonate. The protein operates within photosynthesis; C3 acid pathway. Its activity is regulated as follows. By light-reversible phosphorylation. In terms of biological role, through the carboxylation of phosphoenolpyruvate (PEP) it forms oxaloacetate, a four-carbon dicarboxylic acid source for the tricarboxylic acid cycle. The polypeptide is Phosphoenolpyruvate carboxylase 1 (PEPC) (Sorghum bicolor (Sorghum)).